Consider the following 177-residue polypeptide: R-phycoerythrin beta chain (177 aa).

Residues Cys50 and Cys61 each contribute to the phycourobilin site. Asn72 is modified (N4-methylasparagine). (2R,3E)-phycoerythrobilin-binding residues include Cys82 and Cys158.

Belongs to the phycobiliprotein family. In terms of assembly, heterodimer of an alpha and a beta chain. In terms of processing, contains two covalently linked phycoerythrobilin chromophores and one covalently linked phycourobilin chromophore.

The protein localises to the plastid. Its subcellular location is the chloroplast thylakoid membrane. Light-harvesting photosynthetic bile pigment-protein from the phycobiliprotein complex. This chain is R-phycoerythrin beta chain (cpeB), found in Lophosiphonia boldii (Red alga).